We begin with the raw amino-acid sequence, 556 residues long: Formate--tetrahydrofolate ligase (556 aa).

Residue 65–72 participates in ATP binding; the sequence is TPAGEGKS.

This sequence belongs to the formate--tetrahydrofolate ligase family.

The catalysed reaction is (6S)-5,6,7,8-tetrahydrofolate + formate + ATP = (6R)-10-formyltetrahydrofolate + ADP + phosphate. It participates in one-carbon metabolism; tetrahydrofolate interconversion. The polypeptide is Formate--tetrahydrofolate ligase (Streptococcus equi subsp. zooepidemicus (strain H70)).